We begin with the raw amino-acid sequence, 252 residues long: 3-dehydroquinate dehydratase (252 aa).

3-dehydroquinate contacts are provided by residues serine 21, 46–48 (EWR), and arginine 82. Residue histidine 143 is the Proton donor/acceptor of the active site. The active-site Schiff-base intermediate with substrate is the lysine 170. 3-dehydroquinate-binding residues include arginine 213, serine 232, and glutamine 236.

It belongs to the type-I 3-dehydroquinase family. In terms of assembly, homodimer.

It catalyses the reaction 3-dehydroquinate = 3-dehydroshikimate + H2O. Its pathway is metabolic intermediate biosynthesis; chorismate biosynthesis; chorismate from D-erythrose 4-phosphate and phosphoenolpyruvate: step 3/7. Functionally, involved in the third step of the chorismate pathway, which leads to the biosynthesis of aromatic amino acids. Catalyzes the cis-dehydration of 3-dehydroquinate (DHQ) and introduces the first double bond of the aromatic ring to yield 3-dehydroshikimate. The sequence is that of 3-dehydroquinate dehydratase from Escherichia coli O9:H4 (strain HS).